Here is a 350-residue protein sequence, read N- to C-terminus: Deoxyhypusine synthase-like protein (350 aa).

This sequence belongs to the deoxyhypusine synthase family.

The chain is Deoxyhypusine synthase-like protein from Chlorobaculum tepidum (strain ATCC 49652 / DSM 12025 / NBRC 103806 / TLS) (Chlorobium tepidum).